The primary structure comprises 258 residues: Dihydroorotate dehydrogenase B (NAD(+)), electron transfer subunit (258 aa).

An FAD-binding FR-type domain is found at Ile2 to Leu100. FAD is bound by residues Arg51–Ser54, Ile68–Arg70, and Gly75–Thr76. [2Fe-2S] cluster contacts are provided by Cys220, Cys225, Cys228, and Cys244.

Belongs to the PyrK family. As to quaternary structure, heterotetramer of 2 PyrK and 2 PyrD type B subunits. Requires [2Fe-2S] cluster as cofactor. FAD is required as a cofactor.

It participates in pyrimidine metabolism; UMP biosynthesis via de novo pathway; orotate from (S)-dihydroorotate (NAD(+) route): step 1/1. Its function is as follows. Responsible for channeling the electrons from the oxidation of dihydroorotate from the FMN redox center in the PyrD type B subunit to the ultimate electron acceptor NAD(+). This chain is Dihydroorotate dehydrogenase B (NAD(+)), electron transfer subunit, found in Streptococcus mutans serotype c (strain ATCC 700610 / UA159).